We begin with the raw amino-acid sequence, 943 residues long: Conidiophore development regulator abaA (943 aa).

Disordered regions lie at residues 1 to 69 and 111 to 133; these read MSSS…FNGG and TSRQ…HQRG. A compositionally biased stretch (basic and acidic residues) spans 29-43; it reads IDTRRSFHGDSRLPL. The segment covering 59–68 has biased composition (polar residues); it reads PSSAHSSFNG. The segment at residues 161–254 is a DNA-binding region (TEA); sequence QKDKGGVWRR…QVVKKFFEDL (94 aa). The span at 537 to 555 shows a compositional bias: basic and acidic residues; the sequence is EHQRKKEKRSCGKKPDLER. 2 disordered regions span residues 537-575 and 809-901; these read EHQR…AAWT and GAAG…HHPG. Residues 865–889 are compositionally biased toward low complexity; the sequence is DSWTAGSSAGGAPAATPTGPDWGPT.

Belongs to the TEC1 family.

The protein resides in the nucleus. Functionally, brlA, abaA and wetA are pivotal regulators of conidiophore development and conidium maturation. They act individually and together to regulate their own expression and that of numerous other sporulation-specific genes. Binds to the sequence 5'-CATTCY-3', where Y is a pyrimidine, making both major- and minor-groove contacts. The sequence is that of Conidiophore development regulator abaA from Hapsidospora chrysogena (Acremonium chrysogenum).